The primary structure comprises 299 residues: Bifunctional protein FolD (299 aa).

Residues 168–170 (GRS), S193, and I234 each bind NADP(+).

It belongs to the tetrahydrofolate dehydrogenase/cyclohydrolase family. In terms of assembly, homodimer.

It carries out the reaction (6R)-5,10-methylene-5,6,7,8-tetrahydrofolate + NADP(+) = (6R)-5,10-methenyltetrahydrofolate + NADPH. It catalyses the reaction (6R)-5,10-methenyltetrahydrofolate + H2O = (6R)-10-formyltetrahydrofolate + H(+). Its pathway is one-carbon metabolism; tetrahydrofolate interconversion. Catalyzes the oxidation of 5,10-methylenetetrahydrofolate to 5,10-methenyltetrahydrofolate and then the hydrolysis of 5,10-methenyltetrahydrofolate to 10-formyltetrahydrofolate. This chain is Bifunctional protein FolD, found in Brucella anthropi (strain ATCC 49188 / DSM 6882 / CCUG 24695 / JCM 21032 / LMG 3331 / NBRC 15819 / NCTC 12168 / Alc 37) (Ochrobactrum anthropi).